Here is a 647-residue protein sequence, read N- to C-terminus: Nucleoside triphosphatase I (647 aa).

The Helicase ATP-binding domain maps to 48 to 213 (FIGLSELNSL…KYLINLLRPK (166 aa)). 61–68 (WDTGYGKT) contacts ATP. Residues 150-153 (DEVH) carry the DEXH box motif. Positions 377-540 (YIEACKIILN…KINVLNSFMK (164 aa)) constitute a Helicase C-terminal domain. The binding to the cap-specific mRNA (nucleoside-2'-O-)-methyltransferase stretch occupies residues 466-532 (DIIILDLPWK…DLIKSKQDKI (67 aa)).

The protein belongs to the helicase family. NPH I subfamily. Monomer. Interacts (via C-terminus) with RAP94 (via N-terminus). Interacts with the cap-specific mRNA (nucleoside-2'-O-)-methyltransferase.

Its subcellular location is the virion. The enzyme catalyses a ribonucleoside 5'-triphosphate + H2O = a ribonucleoside 5'-diphosphate + phosphate + H(+). Its function is as follows. DNA-dependent ATPase required for providing the needed energy to achieve the termination of early transcripts. Acts in concert with the RAP94 subunit of the virion RNA polymerase and the capping enzyme/VTF to catalyze release of UUUUUNU-containing nascent RNA from the elongation complex. NPH-I must bind ssDNA in order to exhibit ATPase activity. This chain is Nucleoside triphosphatase I (NPH1), found in Melanoplus sanguinipes entomopoxvirus (MsEPV).